The primary structure comprises 599 residues: NADH-quinone oxidoreductase subunit C/D (599 aa).

Over residues 1–15 (MTDLTAQELAQPSWQ) the composition is skewed to polar residues. Positions 1–21 (MTDLTAQELAQPSWQTRDHQD) are disordered. Positions 1–189 (MTDLTAQELA…DPFELTKQKE (189 aa)) are NADH dehydrogenase I subunit C. The interval 213-599 (DFMFLNLGPN…IDFVMSDVDR (387 aa)) is NADH dehydrogenase I subunit D.

It in the N-terminal section; belongs to the complex I 30 kDa subunit family. In the C-terminal section; belongs to the complex I 49 kDa subunit family. NDH-1 is composed of 13 different subunits. Subunits NuoB, CD, E, F, and G constitute the peripheral sector of the complex.

It is found in the cell inner membrane. It carries out the reaction a quinone + NADH + 5 H(+)(in) = a quinol + NAD(+) + 4 H(+)(out). NDH-1 shuttles electrons from NADH, via FMN and iron-sulfur (Fe-S) centers, to quinones in the respiratory chain. The immediate electron acceptor for the enzyme in this species is believed to be ubiquinone. Couples the redox reaction to proton translocation (for every two electrons transferred, four hydrogen ions are translocated across the cytoplasmic membrane), and thus conserves the redox energy in a proton gradient. The polypeptide is NADH-quinone oxidoreductase subunit C/D (Erwinia tasmaniensis (strain DSM 17950 / CFBP 7177 / CIP 109463 / NCPPB 4357 / Et1/99)).